Here is a 268-residue protein sequence, read N- to C-terminus: Ribosomal RNA small subunit methyltransferase A (268 aa).

S-adenosyl-L-methionine-binding residues include asparagine 23, isoleucine 25, glycine 50, glutamate 72, aspartate 97, and asparagine 116.

Belongs to the class I-like SAM-binding methyltransferase superfamily. rRNA adenine N(6)-methyltransferase family. RsmA subfamily.

Its subcellular location is the cytoplasm. The enzyme catalyses adenosine(1518)/adenosine(1519) in 16S rRNA + 4 S-adenosyl-L-methionine = N(6)-dimethyladenosine(1518)/N(6)-dimethyladenosine(1519) in 16S rRNA + 4 S-adenosyl-L-homocysteine + 4 H(+). Its function is as follows. Specifically dimethylates two adjacent adenosines (A1518 and A1519) in the loop of a conserved hairpin near the 3'-end of 16S rRNA in the 30S particle. May play a critical role in biogenesis of 30S subunits. The sequence is that of Ribosomal RNA small subunit methyltransferase A from Rickettsia bellii (strain OSU 85-389).